We begin with the raw amino-acid sequence, 92 residues long: Small ribosomal subunit protein uS19c (92 aa).

This sequence belongs to the universal ribosomal protein uS19 family.

It is found in the plastid. Its subcellular location is the chloroplast. Its function is as follows. Protein S19 forms a complex with S13 that binds strongly to the 16S ribosomal RNA. This chain is Small ribosomal subunit protein uS19c (rps19), found in Pisum sativum (Garden pea).